Here is a 436-residue protein sequence, read N- to C-terminus: GTPase Der (436 aa).

EngA-type G domains are found at residues 4–167 (PVVA…PKEE) and 176–351 (VKFS…DNHS). Residues 10 to 17 (GRPNVGKS), 57 to 61 (DTGGI), 119 to 122 (NKVD), 182 to 189 (GRPNVGKS), 229 to 233 (DTAGM), and 294 to 297 (NKWD) contribute to the GTP site. The KH-like domain maps to 352–436 (LRVQSSMLND…PIRVIARKRK (85 aa)).

The protein belongs to the TRAFAC class TrmE-Era-EngA-EngB-Septin-like GTPase superfamily. EngA (Der) GTPase family. Associates with the 50S ribosomal subunit.

Its function is as follows. GTPase that plays an essential role in the late steps of ribosome biogenesis. This chain is GTPase Der, found in Listeria welshimeri serovar 6b (strain ATCC 35897 / DSM 20650 / CCUG 15529 / CIP 8149 / NCTC 11857 / SLCC 5334 / V8).